The sequence spans 162 residues: Cyclic pyranopterin monophosphate synthase (162 aa).

Residues 75–77 (LCH) and 113–114 (ME) contribute to the substrate site. Residue Asp128 is part of the active site.

This sequence belongs to the MoaC family. In terms of assembly, homohexamer; trimer of dimers.

The catalysed reaction is (8S)-3',8-cyclo-7,8-dihydroguanosine 5'-triphosphate = cyclic pyranopterin phosphate + diphosphate. Its pathway is cofactor biosynthesis; molybdopterin biosynthesis. Functionally, catalyzes the conversion of (8S)-3',8-cyclo-7,8-dihydroguanosine 5'-triphosphate to cyclic pyranopterin monophosphate (cPMP). This chain is Cyclic pyranopterin monophosphate synthase, found in Xanthobacter autotrophicus (strain ATCC BAA-1158 / Py2).